The primary structure comprises 494 residues: Aspartyl/glutamyl-tRNA(Asn/Gln) amidotransferase subunit B (494 aa).

It belongs to the GatB/GatE family. GatB subfamily. As to quaternary structure, heterotrimer of A, B and C subunits.

The catalysed reaction is L-glutamyl-tRNA(Gln) + L-glutamine + ATP + H2O = L-glutaminyl-tRNA(Gln) + L-glutamate + ADP + phosphate + H(+). It carries out the reaction L-aspartyl-tRNA(Asn) + L-glutamine + ATP + H2O = L-asparaginyl-tRNA(Asn) + L-glutamate + ADP + phosphate + 2 H(+). Its function is as follows. Allows the formation of correctly charged Asn-tRNA(Asn) or Gln-tRNA(Gln) through the transamidation of misacylated Asp-tRNA(Asn) or Glu-tRNA(Gln) in organisms which lack either or both of asparaginyl-tRNA or glutaminyl-tRNA synthetases. The reaction takes place in the presence of glutamine and ATP through an activated phospho-Asp-tRNA(Asn) or phospho-Glu-tRNA(Gln). The sequence is that of Aspartyl/glutamyl-tRNA(Asn/Gln) amidotransferase subunit B from Rhodopseudomonas palustris (strain BisB5).